Here is a 428-residue protein sequence, read N- to C-terminus: Protein ECERIFERUM 26 (428 aa).

The tract at residues methionine 1–proline 36 is disordered. Low complexity predominate over residues threonine 21–proline 36.

It belongs to the plant acyltransferase family. In terms of tissue distribution, highly expressed in leaves.

The protein localises to the cytoplasm. The protein resides in the cytosol. Involved in biosynthesis of the epicuticular wax. Plays a role in very-long-chain fatty acid (VLCFA) biosynthesis and is required for C30 fatty acid elongation in leaf. Despite its classification as a BAHD acyltransferase based on sequence homology, CER26 does not seem to share the catalytic mechanism of the members of the BAHD family. This Arabidopsis thaliana (Mouse-ear cress) protein is Protein ECERIFERUM 26 (CER26).